The chain runs to 228 residues: Carbonic anhydrase (228 aa).

Cysteine 56, aspartate 58, histidine 112, and cysteine 115 together coordinate Zn(2+).

It belongs to the beta-class carbonic anhydrase family. It depends on Zn(2+) as a cofactor.

The enzyme catalyses hydrogencarbonate + H(+) = CO2 + H2O. Catalyzes the reversible hydration of CO(2) to H(2)CO(3). The main role may be to provide inorganic carbon for the bicarbonate-dependent carboxylation reactions catalyzed by pyruvate carboxylase, acetyl-CoA carboxylase and carbamoyl-phosphate synthetase. Involved in osmoadaptation. This is Carbonic anhydrase from Emericella nidulans (strain FGSC A4 / ATCC 38163 / CBS 112.46 / NRRL 194 / M139) (Aspergillus nidulans).